We begin with the raw amino-acid sequence, 59 residues long: Large ribosomal subunit protein uL30 (59 aa).

It belongs to the universal ribosomal protein uL30 family. Part of the 50S ribosomal subunit.

This Clostridium botulinum (strain ATCC 19397 / Type A) protein is Large ribosomal subunit protein uL30.